The sequence spans 101 residues: MSMAEGDTLISVDYEVFGKVQGVFFRKYTQAEGKKLGLVGWVQNTDQGTVQGQLQGPTSKVRHMQEWLETRGSPKSHIDRASFNNEKVISKLDYSDFQIVK.

Ser-2 bears the N-acetylserine mark. Ser-2 carries the post-translational modification N-acetylalanine. The Acylphosphatase-like domain occupies 11–101 (SVDYEVFGKV…LDYSDFQIVK (91 aa)). Active-site residues include Arg-26 and Asn-44.

Belongs to the acylphosphatase family. In terms of tissue distribution, organ-common type isozyme is found in many different tissues.

The catalysed reaction is an acyl phosphate + H2O = a carboxylate + phosphate + H(+). This Sus scrofa (Pig) protein is Acylphosphatase-1 (ACYP1).